An 86-amino-acid chain; its full sequence is Testis-expressed protein 54 (86 aa).

Residues 1–34 (MGCCQDKNRWASDEQARDEVTEDGREGNEVDNSG) show a composition bias toward basic and acidic residues. Disordered stretches follow at residues 1–43 (MGCC…SNES) and 57–86 (SRRESSRSGKQDNQMQERKHEGSHKEPEKG).

In terms of tissue distribution, expressed in Testis.

The chain is Testis-expressed protein 54 from Mus musculus (Mouse).